A 338-amino-acid polypeptide reads, in one-letter code: Beta-ketoacyl-[acyl-carrier-protein] synthase III (338 aa).

Residues Cys-119 and His-261 contribute to the active site. The interval 262 to 266 (QANQR) is ACP-binding. Residue Asn-291 is part of the active site.

The protein belongs to the thiolase-like superfamily. FabH family. As to quaternary structure, homodimer.

It localises to the cytoplasm. It carries out the reaction malonyl-[ACP] + acetyl-CoA + H(+) = 3-oxobutanoyl-[ACP] + CO2 + CoA. It participates in lipid metabolism; fatty acid biosynthesis. Functionally, catalyzes the condensation reaction of fatty acid synthesis by the addition to an acyl acceptor of two carbons from malonyl-ACP. Catalyzes the first condensation reaction which initiates fatty acid synthesis and may therefore play a role in governing the total rate of fatty acid production. Possesses both acetoacetyl-ACP synthase and acetyl transacylase activities. Its substrate specificity determines the biosynthesis of branched-chain and/or straight-chain of fatty acids. In Prochlorococcus marinus (strain NATL2A), this protein is Beta-ketoacyl-[acyl-carrier-protein] synthase III.